We begin with the raw amino-acid sequence, 1761 residues long: Lysine-specific demethylase 3B (1761 aa).

At alanine 2 the chain carries N-acetylalanine. The disordered stretch occupies residues 253 to 346; that stretch reads DNSAPQSEGG…QRAKQPPSTF (94 aa). Residues 298–309 show a composition bias toward basic and acidic residues; the sequence is ASKKLKGDRGEV. Lysine 361 carries the post-translational modification N6-acetyllysine. Disordered regions lie at residues 370-394 and 438-496; these read QDEP…QTPL and DTGL…NGVL. Polar residues-rich tracts occupy residues 380–392, 453–468, and 477–495; these read ASFT…TGQT, SRSQ…SILA, and PSSS…SNGV. Serine 492, serine 546, serine 556, and serine 560 each carry phosphoserine. A disordered region spans residues 572-603; the sequence is RSVLGTDTKPGSKAGSSVDRKVPAESMPTLTP. Threonine 614 bears the Phosphothreonine mark. The segment at 714-762 is disordered; sequence GPSLSAMGNGRSSSPTSSLTQPIEMPTLSSSPTEERPTVGPGQQDNPLL. The span at 723 to 745 shows a compositional bias: polar residues; the sequence is GRSSSPTSSLTQPIEMPTLSSSP. Phosphoserine occurs at positions 766, 773, 778, and 779. Residue lysine 788 forms a Glycyl lysine isopeptide (Lys-Gly) (interchain with G-Cter in SUMO2) linkage. Serine 798 is modified (phosphoserine). The tract at residues 805–827 is disordered; that stretch reads ACRQDSDSSTNSDLSDLSDSEEQ. A C6-type zinc finger spans residues 1031–1056; it reads CDVCETTLFNIHWVCRKCGFGVCLDC. Polar residues predominate over residues 1142 to 1161; the sequence is GMSQLPSINPSASSGNETTF. The disordered stretch occupies residues 1142 to 1220; it reads GMSQLPSINP…PCPDTAPPSS (79 aa). Positions 1174-1193 are enriched in basic and acidic residues; the sequence is EPDHVPKADSTDIRSEEPLK. Over residues 1194–1204 the composition is skewed to polar residues; it reads TDSSASNSNSE. 2 positions are modified to phosphoserine: serine 1253 and serine 1259. The LXXLL motif motif lies at 1293-1297; that stretch reads LRDLL. Residues 1498 to 1721 enclose the JmjC domain; it reads MPTRFEDLME…HCFRLTQEFR (224 aa). Histidine 1560, aspartate 1562, and histidine 1689 together coordinate Fe cation.

It belongs to the JHDM2 histone demethylase family. Fe(2+) serves as cofactor. As to expression, ubiquitous. Highly expressed in placenta, skeletal muscle, kidney, heart and liver.

The protein localises to the nucleus. The enzyme catalyses N(6),N(6)-dimethyl-L-lysyl(9)-[histone H3] + 2 2-oxoglutarate + 2 O2 = L-lysyl(9)-[histone H3] + 2 formaldehyde + 2 succinate + 2 CO2. Its function is as follows. Histone demethylase that specifically demethylates 'Lys-9' of histone H3, thereby playing a central role in histone code. Demethylation of Lys residue generates formaldehyde and succinate. May have tumor suppressor activity. The polypeptide is Lysine-specific demethylase 3B (KDM3B) (Homo sapiens (Human)).